We begin with the raw amino-acid sequence, 116 residues long: NADH-ubiquinone oxidoreductase chain 3 (116 aa).

The next 3 membrane-spanning stretches (helical) occupy residues 3–23 (LITT…TVSF), 56–76 (FFLI…LLPL), and 87–107 (LTLV…IYEW).

It belongs to the complex I subunit 3 family.

It localises to the mitochondrion membrane. It carries out the reaction a ubiquinone + NADH + 5 H(+)(in) = a ubiquinol + NAD(+) + 4 H(+)(out). Functionally, core subunit of the mitochondrial membrane respiratory chain NADH dehydrogenase (Complex I) that is believed to belong to the minimal assembly required for catalysis. Complex I functions in the transfer of electrons from NADH to the respiratory chain. The immediate electron acceptor for the enzyme is believed to be ubiquinone. The polypeptide is NADH-ubiquinone oxidoreductase chain 3 (MT-ND3) (Oncorhynchus kisutch (Coho salmon)).